Consider the following 354-residue polypeptide: Guanine nucleotide-binding protein alpha-2 subunit (354 aa).

Positions 33–354 (KIYKVLLLGA…QHSLKEAGMF (322 aa)) constitute a G-alpha domain. Residues 36–49 (KVLLLGASDSGKST) are G1 motif. Asp44, Ser45, Gly46, Lys47, Ser48, Thr49, Asp148, Leu173, Thr179, Gly201, Asn269, Lys270, Asp272, and Ala326 together coordinate GTP. Ser48 contributes to the Mg(2+) binding site. The G2 motif stretch occupies residues 171–179 (DILRSRNST). Thr179 serves as a coordination point for Mg(2+). Residues 194 to 203 (IRMFDVGGQR) form a G3 motif region. Positions 265-272 (ILFLNKFD) are G4 motif. The G5 motif stretch occupies residues 324–329 (TTAVDT).

Belongs to the G-alpha family. In terms of assembly, g proteins are composed of 3 units; alpha, beta and gamma. Binding of the beta-gamma subunit complex (git5-git11) to the alpha subunit (gpa2) facilitates interaction with GPCR git3. Interacts with GPCR git3; the interaction is direct and leads to activation of gpa2 upon glucose stimulation. Interacts with adenylate cyclase cyr1 (via N-terminus); the interaction is direct and serves to activate adenylate cyclase and cAMP-PKA signaling, to repress sexual development and gluconeogenesis. It depends on Mg(2+) as a cofactor.

It localises to the cell membrane. Alpha subunit of the heterotrimeric guanine nucleotide-binding protein (G protein) involved in glucose-induced cAMP signaling. Binds to its cognate transmembrane receptor git3, which senses extracellular glucose, and activates cAMP-PKA signaling to repress sexual development and gluconeogenesis. The sequence is that of Guanine nucleotide-binding protein alpha-2 subunit from Schizosaccharomyces pombe (strain 972 / ATCC 24843) (Fission yeast).